Consider the following 147-residue polypeptide: HTH-type transcriptional regulator HmrR (147 aa).

Residues 1 to 69 (MNIGEASKVS…VEQIKELLAL (69 aa)) form the HTH merR-type domain. Positions 4-23 (GEASKVSGVSSKMIRYYEQI) form a DNA-binding region, H-T-H motif.

As to quaternary structure, homodimer.

Its subcellular location is the cytoplasm. In terms of biological role, regulates the transcription of actP. It detects cytoplasmic copper stress and activates transcription in response to increasing copper concentrations. In the absence of copper, it negatively regulates the transcription of actP. This Sinorhizobium medicae (strain WSM419) (Ensifer medicae) protein is HTH-type transcriptional regulator HmrR (hmrR).